Here is a 436-residue protein sequence, read N- to C-terminus: MAVTVENLEKLERKMTLTLPLNTIQSEVATRLKKLARTVKMDGFRPGKVPMSVVSQRYAYSVHYEVMNDKVGEAFAVAANEAKLRVAGQPRISEKEDAPEGELAFDAIFEVYPDVKIADLANAEVEKLSAEVSDAAIDKTLDILRKQRRTFALRAADEPAQDGDRVTIDFEGKMDGETFAGGKAEDFQFIVGDGQMLKEFEDAVRGMKSGESKTFPLNFPADYHGKDVAGKQADFLVTVKKIEAAHLPEVNEELAKSLGIADATVEGLRSDIKKNLEREVKFRLLARNKNAVMDALVTNAELDLPNASVQAELERLIENARADLKQRGIKDADKAPIPEELFRPQAEKRVRLGLVVAELVRANELQAKPEQLKSHIEELAASYEKPQEVVRWYLSDNSRMAEVEAVVIENNVTDFVLGKAKVSEKAISFDELMGQN.

The region spanning 163–248 (GDRVTIDFEG…VKKIEAAHLP (86 aa)) is the PPIase FKBP-type domain.

The protein belongs to the FKBP-type PPIase family. Tig subfamily.

It is found in the cytoplasm. The enzyme catalyses [protein]-peptidylproline (omega=180) = [protein]-peptidylproline (omega=0). Functionally, involved in protein export. Acts as a chaperone by maintaining the newly synthesized protein in an open conformation. Functions as a peptidyl-prolyl cis-trans isomerase. The protein is Trigger factor of Polaromonas naphthalenivorans (strain CJ2).